The sequence spans 183 residues: Shikimate kinase (183 aa).

19 to 24 (GAGKTT) serves as a coordination point for ATP. Residue threonine 23 participates in Mg(2+) binding. Substrate contacts are provided by aspartate 41, arginine 65, and glycine 87. Residue arginine 124 participates in ATP binding. Arginine 143 is a binding site for substrate.

Belongs to the shikimate kinase family. Monomer. Requires Mg(2+) as cofactor.

Its subcellular location is the cytoplasm. The catalysed reaction is shikimate + ATP = 3-phosphoshikimate + ADP + H(+). It functions in the pathway metabolic intermediate biosynthesis; chorismate biosynthesis; chorismate from D-erythrose 4-phosphate and phosphoenolpyruvate: step 5/7. Catalyzes the specific phosphorylation of the 3-hydroxyl group of shikimic acid using ATP as a cosubstrate. This is Shikimate kinase from Thermosynechococcus vestitus (strain NIES-2133 / IAM M-273 / BP-1).